The following is a 274-amino-acid chain: Putative bidirectional sugar transporter SWEET7d (274 aa).

The Extracellular portion of the chain corresponds to 1–8 (MVPDLIRN). The helical transmembrane segment at 9-29 (VVGIVGNVISFGLFLSPVPTF) threads the bilayer. The MtN3/slv 1 domain occupies 9–96 (VVGIVGNVIS…TIFFLFSDKK (88 aa)). Residues 30 to 45 (WRIIKNKDVRDFKADQ) lie on the Cytoplasmic side of the membrane. Residues 46 to 66 (YLATLLNCMLWVFYGLPIVHP) form a helical membrane-spanning segment. Over 67–68 (NS) the chain is Extracellular. Residues 69–89 (ILVVTINGIGLVIEAVYLTIF) form a helical membrane-spanning segment. At 90 to 100 (FLFSDKKNKKK) the chain is on the cytoplasmic side. Residues 101-121 (MGVVLATEALFMAAVALGVLL) form a helical membrane-spanning segment. At 122–130 (DAHTHQRRS) the chain is on the extracellular side. A helical transmembrane segment spans residues 131–151 (LIVGILCVIFGTIMYSSPLTI). One can recognise a MtN3/slv 2 domain in the interval 132-214 (IVGILCVIFG…QLILYAIYYR (83 aa)). The Cytoplasmic portion of the chain corresponds to 152–164 (MSQVVKTKSVEYM). The chain crosses the membrane as a helical span at residues 165-185 (PLLLSVVSFLNGLCWTSYALI). Residues 186 to 188 (RFD) are Extracellular-facing. The chain crosses the membrane as a helical span at residues 189-209 (IFITIPNGLGVLFALMQLILY). Over 210–274 (AIYYRTTPKK…SISRLSHKLA (65 aa)) the chain is Cytoplasmic. Positions 218–274 (KKPSTTGPHPRSRIRTSSYQPSPPSPRAPASSPLSARTTTSMAAMSPSISRLSHKLA) are disordered. Residues 245-258 (APASSPLSARTTTS) show a composition bias toward low complexity.

Belongs to the SWEET sugar transporter family. In terms of assembly, forms homooligomers and/or heterooligomers.

Its subcellular location is the cell membrane. In terms of biological role, mediates both low-affinity uptake and efflux of sugar across the plasma membrane. This chain is Putative bidirectional sugar transporter SWEET7d (SWEET7D), found in Oryza sativa subsp. japonica (Rice).